The chain runs to 1713 residues: uncharacterized protein (1713 aa).

Polar residues predominate over residues 1–12 (MNENEFSTNSLI). Disordered stretches follow at residues 1 to 35 (MNENEFSTNSLINQQGTNNNNNNNTNNNITNINFG), 79 to 200 (QQLN…KLSN), 226 to 290 (GNNN…QPLS), 309 to 557 (QYLS…PMSH), 713 to 734 (SNDQNDRVPIHQLGGATGKKDR), 808 to 952 (SPPM…SITT), and 1143 to 1190 (HHHH…SISR). Low complexity-rich tracts occupy residues 13 to 35 (NQQGTNNNNNNNTNNNITNINFG), 79 to 109 (QQLNTPPTTPNTSTPSTPTSSRNNNNNNNNN), 126 to 170 (NNSG…NSGN), 177 to 200 (NMSDITNDNSNSSSNAGSNSKLSN), and 226 to 264 (GNNNYHNGNNENGNNTFHVGNNLNNNNNNNNIGSSGGNN). Residues 265–276 (SHHHHNHSHHNS) are compositionally biased toward basic residues. 2 stretches are compositionally biased toward low complexity: residues 317–470 (NNIN…SPAS) and 478–489 (SNNFGGNHNNYN). Positions 490-504 (HAHHSHHNNHAHHNT) are enriched in basic residues. Over residues 505–553 (HNYNNNNNNNNNNNNNNNNNNNNSNNSNNNSNTNNNGNNGNNSNNNNNH) the composition is skewed to low complexity. A DNA-binding region (NDT80) is located at residues 544-825 (GNNSNNNNNH…QNPGRFLNHD (282 aa)). A compositionally biased stretch (basic and acidic residues) spans 822–832 (LNHDKSLKKDP). Residues 838-874 (GGKGGGGSGSGGMGGGMGGGMGNNGSSGSSSNGGYGN) show a composition bias toward gly residues. 2 stretches are compositionally biased toward low complexity: residues 898-946 (SPTT…PTLT) and 1148-1189 (QQQQ…SSIS). Positions 1240–1355 (SDQRIKSNIR…RSLKKEKDHI (116 aa)) constitute a Peptidase S74 domain. Helical transmembrane passes span 1416–1436 (TMFVFGFFIPICWIIGSFYLF), 1447–1467 (LMNFVATIIFILALSLMTFYV), and 1473–1493 (LIIAPALIVMGFVVCILVGFF). Residues 1596-1605 (NSNNNINNNN) are compositionally biased toward low complexity. Disordered regions lie at residues 1596 to 1634 (NSNNNINNNNQERLSDSSKSSFIDDFKKSSSNNHKDFHE) and 1646 to 1665 (IKGKKQSSSSAKTRSLSSSN). The span at 1617-1634 (FIDDFKKSSSNNHKDFHE) shows a compositional bias: basic and acidic residues.

It is found in the membrane. This is an uncharacterized protein from Dictyostelium discoideum (Social amoeba).